We begin with the raw amino-acid sequence, 139 residues long: Putative pre-16S rRNA nuclease (139 aa).

This sequence belongs to the YqgF nuclease family.

The protein resides in the cytoplasm. Functionally, could be a nuclease involved in processing of the 5'-end of pre-16S rRNA. The chain is Putative pre-16S rRNA nuclease from Legionella pneumophila (strain Lens).